Reading from the N-terminus, the 336-residue chain is Transcription factor MYB29 (336 aa).

2 consecutive HTH myb-type domains span residues Gly9–Ile65 and Lys66–Leu116. DNA-binding regions (H-T-H motif) lie at residues Trp37–Leu61 and Trp89–Leu112. The tract at residues Lys127 to Asp170 is disordered. Residues Ser141 to Ser154 are compositionally biased toward low complexity. Positions Lys155–Asp164 are enriched in polar residues.

As to quaternary structure, can form complexes with MYC2, MYC3 or MYC4. Expressed in both vegetative and generative organs. Mostly present in seedlings, inflorescences, roots and stems, and, to a lower extent, in leaves (in midvein and trichomes) and siliques.

The protein localises to the nucleus. In terms of biological role, plays a minor rheostat role in aliphatic glucosinolates (GLSs) biosynthesis, mostly short chained. Together with MYB28/HAG1 and MYB76/HAG2, promotes aliphatic glucosinolate biosynthesis but represses indolic glucosinolate biosynthesis. Prevents insect performance (e.g. lepidopteran insect Mamestra brassicae) by promoting glucosinolates. This chain is Transcription factor MYB29 (MYB29), found in Arabidopsis thaliana (Mouse-ear cress).